Consider the following 138-residue polypeptide: CLAVATA3/ESR (CLE)-related protein 2 (138 aa).

The N-terminal stretch at 1–22 is a signal peptide; that stretch reads MPNIFKILLIVLLAVVSFRLSA. The segment at 23–90 is required for secretion from the host cytoplasm to the host apoplasm; the sequence is STGDKKTAND…VPSHVTNRSM (68 aa). N-linked (GlcNAc...) asparagine glycans are attached at residues asparagine 37, asparagine 87, and asparagine 123. 2 disordered regions span residues 66-97 and 116-138; these read AIGR…PPPV and LAEK…PHHH. Residues 127 to 138 carry the CLE motif; the sequence is RLSPSGPDPHHH.

The protein belongs to the CLV3/ESR signal peptide family. Highly expressed exclusively within the dorsal esophageal gland cell during syncytium formation in host plants (at protein level).

It is found in the secreted. Its subcellular location is the host cytoplasm. It localises to the host extracellular space. The protein resides in the extracellular space. The protein localises to the apoplast. Its function is as follows. Mimics host plant CLE extracellular signal peptides that regulate cell fate. May play a role in the differentiation or division of feeding cells (syncytia) induced in plant roots during infection. The chain is CLAVATA3/ESR (CLE)-related protein 2 (CLE2) from Heterodera glycines (Soybean cyst nematode worm).